A 471-amino-acid polypeptide reads, in one-letter code: ATP synthase subunit beta (471 aa).

G154–T161 is an ATP binding site.

It belongs to the ATPase alpha/beta chains family. As to quaternary structure, F-type ATPases have 2 components, CF(1) - the catalytic core - and CF(0) - the membrane proton channel. CF(1) has five subunits: alpha(3), beta(3), gamma(1), delta(1), epsilon(1). CF(0) has three main subunits: a(1), b(2) and c(9-12). The alpha and beta chains form an alternating ring which encloses part of the gamma chain. CF(1) is attached to CF(0) by a central stalk formed by the gamma and epsilon chains, while a peripheral stalk is formed by the delta and b chains.

The protein resides in the cell membrane. It catalyses the reaction ATP + H2O + 4 H(+)(in) = ADP + phosphate + 5 H(+)(out). Its function is as follows. Produces ATP from ADP in the presence of a proton gradient across the membrane. The catalytic sites are hosted primarily by the beta subunits. In Mesomycoplasma hyopneumoniae (strain 7448) (Mycoplasma hyopneumoniae), this protein is ATP synthase subunit beta.